Reading from the N-terminus, the 79-residue chain is Beta-defensin 15 (79 aa).

An N-terminal signal peptide occupies residues 1 to 20 (MKTFLFLFAVFFFLDPAKNA). 3 cysteine pairs are disulfide-bonded: cysteine 26–cysteine 53, cysteine 33–cysteine 47, and cysteine 37–cysteine 54.

Belongs to the beta-defensin family.

It is found in the secreted. Has antibacterial activity. This chain is Beta-defensin 15 (Defb15), found in Rattus norvegicus (Rat).